Here is a 215-residue protein sequence, read N- to C-terminus: MKILITGFDPFGGEAINPALEAIKKLPATIHGAEIKCIEVPTVFQKSADVLQQHIESFQPDAVLCIGQAGGRTGLTPERVAINQDDARIPDNEGNQPIDTPIRADGKAAYFSTLPIKAMVAAIHQAGLPASVSNTAGTFVCNHLMYQALYLVDKYCPNAKAGFMHIPFMMEQVVDKPNTAAMNLDDITRGIEAAIFAIVDFKDRSDLKRVGGATH.

Residues Glu78, Cys141, and His165 contribute to the active site.

Belongs to the peptidase C15 family. In terms of assembly, homotetramer.

It is found in the cytoplasm. The catalysed reaction is Release of an N-terminal pyroglutamyl group from a polypeptide, the second amino acid generally not being Pro.. In terms of biological role, removes 5-oxoproline from various penultimate amino acid residues except L-proline. The polypeptide is Pyrrolidone-carboxylate peptidase (Streptococcus pyogenes serotype M18 (strain MGAS8232)).